The sequence spans 447 residues: uncharacterized protein (447 aa).

Transmembrane regions (helical) follow at residues 380 to 400 and 412 to 432; these read VLEI…LLLT and ILGF…GVYV.

It localises to the cell membrane. This is an uncharacterized protein from Methanocaldococcus jannaschii (strain ATCC 43067 / DSM 2661 / JAL-1 / JCM 10045 / NBRC 100440) (Methanococcus jannaschii).